Consider the following 344-residue polypeptide: L-sulfolactate dehydrogenase (344 aa).

It belongs to the LDH2/MDH2 oxidoreductase family.

It is found in the cytoplasm. It catalyses the reaction a (2S)-2-hydroxycarboxylate + NAD(+) = a 2-oxocarboxylate + NADH + H(+). It participates in cofactor biosynthesis; coenzyme M biosynthesis; sulfoacetaldehyde from phosphoenolpyruvate and sulfite: step 3/4. It functions in the pathway cofactor biosynthesis; 5,6,7,8-tetrahydromethanopterin biosynthesis. Its function is as follows. Catalyzes the reduction of sulfopyruvate to (R)-sulfolactate much more efficiently than the reverse reaction. Also catalyzes the reduction of oxaloacetate, alpha-ketoglutarate, and to a much lower extent, KHTCA, but not pyruvate. Involved in the biosynthesis of both coenzyme M (with (R)-sulfolactate) and methanopterin (with alpha-ketoglutarate). In Methanocaldococcus jannaschii (strain ATCC 43067 / DSM 2661 / JAL-1 / JCM 10045 / NBRC 100440) (Methanococcus jannaschii), this protein is L-sulfolactate dehydrogenase (comC).